A 396-amino-acid chain; its full sequence is Putative glutamate--cysteine ligase 2-2 (396 aa).

The protein belongs to the glutamate--cysteine ligase type 2 family. YbdK subfamily.

The catalysed reaction is L-cysteine + L-glutamate + ATP = gamma-L-glutamyl-L-cysteine + ADP + phosphate + H(+). ATP-dependent carboxylate-amine ligase which exhibits weak glutamate--cysteine ligase activity. The chain is Putative glutamate--cysteine ligase 2-2 from Mycolicibacterium smegmatis (strain ATCC 700084 / mc(2)155) (Mycobacterium smegmatis).